A 159-amino-acid chain; its full sequence is Methyl-coenzyme M reductase operon protein D (159 aa).

As to quaternary structure, MCR is composed of three subunits: alpha, beta, and gamma. The function of proteins C and D is not known.

This Methanococcus voltae protein is Methyl-coenzyme M reductase operon protein D (mcrD).